The primary structure comprises 103 residues: Small ribosomal subunit protein uS10 (103 aa).

It belongs to the universal ribosomal protein uS10 family. As to quaternary structure, part of the 30S ribosomal subunit.

Functionally, involved in the binding of tRNA to the ribosomes. This chain is Small ribosomal subunit protein uS10, found in Paraburkholderia xenovorans (strain LB400).